A 121-amino-acid chain; its full sequence is Cu-Zn superoxide dismutase-like protein (121 aa).

A disulfide bridge links C48 with C98.

It belongs to the Cu-Zn superoxide dismutase family.

Its subcellular location is the host cytoplasm. Functionally, virion protein with no enzymatic activity. The chain is Cu-Zn superoxide dismutase-like protein from Vaccinia virus (strain Ankara) (VACV).